The following is a 268-amino-acid chain: Undecaprenyl-diphosphatase (268 aa).

A run of 7 helical transmembrane segments spans residues 5–25 (SIIS…IPVS), 43–63 (GNTF…LVYF), 84–104 (LSVL…HGFI), 109–129 (FETP…LYVI), 184–204 (AAEF…ALDL), 213–233 (IDDI…GIFV), and 248–268 (PFAI…WLLG).

It belongs to the UppP family.

The protein localises to the cell inner membrane. The enzyme catalyses di-trans,octa-cis-undecaprenyl diphosphate + H2O = di-trans,octa-cis-undecaprenyl phosphate + phosphate + H(+). Catalyzes the dephosphorylation of undecaprenyl diphosphate (UPP). Confers resistance to bacitracin. The protein is Undecaprenyl-diphosphatase of Sinorhizobium medicae (strain WSM419) (Ensifer medicae).